A 135-amino-acid chain; its full sequence is Transcriptional activator protein (135 aa).

The Nuclear localization signal signature appears at 17-32 (KAQHKVAKKRAIRRSR). Residues 37-54 (CGCSYYIHINCRNYGFSH) fold into a zinc finger. Positions 82-102 (AAPSNSSRVPDVCDPNTDNVQ) are disordered. The transactivation stretch occupies residues 120–135 (ALPLFDGDFWDDIIDF).

This sequence belongs to the geminiviridae transcriptional activator protein family. Monomer. Homodimer. Homooligomer. Self-interaction correlates with nuclear localization and efficient activation of transcription. Monomers suppress local silencing by interacting with and inactivating host adenosine kinase 2 (ADK2) in the cytoplasm. Interacts with and inhibits host SNF1 kinase. Binds to ssDNA. In terms of processing, phosphorylated.

It localises to the host nucleus. It is found in the host cytoplasm. Functionally, strong activator of the late viral genes promoters. Enhances the expression of the capsid protein and nuclear shuttle protein. Acts as a suppressor of RNA-mediated gene silencing, also known as post-transcriptional gene silencing (PTGS), a mechanism of plant viral defense that limits the accumulation of viral RNAs. Suppresses the host RNA silencing by inhibiting adenosine kinase 2 (ADK2), a kinase involved in a general methylation pathway. Also suppresses the host basal defense by interacting with and inhibiting SNF1 kinase, a key regulator of cell metabolism implicated in innate antiviral defense. Determines pathogenicity. The protein is Transcriptional activator protein of Mungbean yellow mosaic virus (strain Vigna) (MYMV).